The following is a 123-amino-acid chain: Small ribosomal subunit protein uS12 (123 aa).

The disordered stretch occupies residues 1-32 (MPTINQLIRKPREAQKARDKAPALQSSPQKRG). Over residues 10–21 (KPREAQKARDKA) the composition is skewed to basic and acidic residues. Position 89 is a 3-methylthioaspartic acid (D89).

Belongs to the universal ribosomal protein uS12 family. In terms of assembly, part of the 30S ribosomal subunit. Contacts proteins S8 and S17. May interact with IF1 in the 30S initiation complex.

With S4 and S5 plays an important role in translational accuracy. Its function is as follows. Interacts with and stabilizes bases of the 16S rRNA that are involved in tRNA selection in the A site and with the mRNA backbone. Located at the interface of the 30S and 50S subunits, it traverses the body of the 30S subunit contacting proteins on the other side and probably holding the rRNA structure together. The combined cluster of proteins S8, S12 and S17 appears to hold together the shoulder and platform of the 30S subunit. This is Small ribosomal subunit protein uS12 from Azorhizobium caulinodans (strain ATCC 43989 / DSM 5975 / JCM 20966 / LMG 6465 / NBRC 14845 / NCIMB 13405 / ORS 571).